The primary structure comprises 354 residues: Methylthioribose-1-phosphate isomerase (354 aa).

Residues 54–56 (RGA), arginine 97, and glutamine 204 each bind substrate. Aspartate 245 functions as the Proton donor in the catalytic mechanism. Substrate is bound at residue 255–256 (NK).

It belongs to the eIF-2B alpha/beta/delta subunits family. MtnA subfamily.

The catalysed reaction is 5-(methylsulfanyl)-alpha-D-ribose 1-phosphate = 5-(methylsulfanyl)-D-ribulose 1-phosphate. The protein operates within amino-acid biosynthesis; L-methionine biosynthesis via salvage pathway; L-methionine from S-methyl-5-thio-alpha-D-ribose 1-phosphate: step 1/6. In terms of biological role, catalyzes the interconversion of methylthioribose-1-phosphate (MTR-1-P) into methylthioribulose-1-phosphate (MTRu-1-P). This Albidiferax ferrireducens (strain ATCC BAA-621 / DSM 15236 / T118) (Rhodoferax ferrireducens) protein is Methylthioribose-1-phosphate isomerase.